Here is a 367-residue protein sequence, read N- to C-terminus: Heparan sulfate glucosamine 3-O-sulfotransferase 2 (367 aa).

At 1-19 the chain is on the cytoplasmic side; the sequence is MAYRVLGRAGPPQPRRARR. The chain crosses the membrane as a helical; Signal-anchor for type II membrane protein span at residues 20–39; the sequence is LLFAFTLSLSCTYLCYSFLC. Topologically, residues 40-367 are lumenal; sequence CCDGLGQSRL…ETVGQDFRWE (328 aa). Positions 66-115 are disordered; the sequence is LLAKSRPCDPPGPTPSEPSAPSAPAAAAPAPRLSGSNHSGSPKPGTKRLP. A compositionally biased stretch (pro residues) spans 73–83; sequence CDPPGPTPSEP. Positions 84-96 are enriched in low complexity; sequence SAPSAPAAAAPAP. Residue N102 is glycosylated (N-linked (GlcNAc...) asparagine). A 3'-phosphoadenylyl sulfate-binding site is contributed by 124-128; it reads KGGTR. Substrate-binding positions include 146–152 and 177–180; these read EPHFFDR and KTPS. A glycan (N-linked (GlcNAc...) asparagine) is linked at N193. 3'-phosphoadenylyl sulfate is bound by residues R205 and S213. N-linked (GlcNAc...) asparagine glycosylation is present at N235. 245-246 contributes to the substrate binding site; sequence WN. A glycan (N-linked (GlcNAc...) asparagine) is linked at N306. The cysteines at positions 313 and 325 are disulfide-linked. Residue 330-334 coordinates 3'-phosphoadenylyl sulfate; sequence KGRTH.

It belongs to the sulfotransferase 1 family.

It is found in the golgi apparatus membrane. It catalyses the reaction alpha-D-glucosaminyl-[heparan sulfate](n) + 3'-phosphoadenylyl sulfate = 3-sulfo-alpha-D-glucosaminyl-[heparan sulfate](n) + adenosine 3',5'-bisphosphate + H(+). Its function is as follows. Sulfotransferase that utilizes 3'-phospho-5'-adenylyl sulfate (PAPS) to catalyze the transfer of a sulfo group to an N-unsubstituted glucosamine linked to a 2-O-sulfo iduronic acid unit on heparan sulfate. Catalyzes the O-sulfation of glucosamine in GlcA2S-GlcNS. Unlike HS3ST1/3-OST-1, does not convert non-anticoagulant heparan sulfate to anticoagulant heparan sulfate. This chain is Heparan sulfate glucosamine 3-O-sulfotransferase 2 (Hs3st2), found in Mus musculus (Mouse).